The sequence spans 169 residues: Glycine-rich RNA-binding protein 10 (169 aa).

The region spanning Tyr-6 to Ser-84 is the RRM domain. Disordered stretches follow at residues Asn-80–Arg-101 and Gly-121–Trp-169. Residues Arg-85–Arg-101 show a composition bias toward gly residues.

As to expression, expressed only in roots and stems.

Possibly has a role in RNA transcription or processing during stress. The polypeptide is Glycine-rich RNA-binding protein 10 (GRP10) (Brassica napus (Rape)).